Consider the following 29-residue polypeptide: GLWSKIKTAGKSVAKAAAKAAVKAVTNAV.

Belongs to the frog skin active peptide (FSAP) family. Dermaseptin subfamily. Expressed by the skin glands.

The protein resides in the secreted. Its function is as follows. Potent antimicrobial peptide with activity against bacteria and protozoa. Also has activity against fungi. Probably acts by disturbing membrane functions with its amphipathic structure. This is Dermaseptin-S5 from Phyllomedusa sauvagei (Sauvage's leaf frog).